A 353-amino-acid polypeptide reads, in one-letter code: uncharacterized protein (353 aa).

The signal sequence occupies residues 1–24 (MRVVKRIAVACYLGITIFSGIAFG).

The protein belongs to the chlamydial CPn_1058/CT_355/TC_0634 family.

This is an uncharacterized protein from Chlamydia muridarum (strain MoPn / Nigg).